The following is a 429-amino-acid chain: Probable imidazolonepropionase (429 aa).

Positions 161 and 194 each coordinate 4-imidazolone-5-propanoate. Tyr161 provides a ligand contact to N-formimidoyl-L-glutamate. His262 is a Fe(3+) binding site. His262 is a Zn(2+) binding site. Glu265 provides a ligand contact to 4-imidazolone-5-propanoate. A Fe(3+)-binding site is contributed by Asp336. Asp336 lines the Zn(2+) pocket. Asn338 provides a ligand contact to N-formimidoyl-L-glutamate.

This sequence belongs to the metallo-dependent hydrolases superfamily. HutI family. Zn(2+) is required as a cofactor. The cofactor is Fe(3+).

It catalyses the reaction 4-imidazolone-5-propanoate + H2O = N-formimidoyl-L-glutamate. It participates in amino-acid degradation; L-histidine degradation into L-glutamate; N-formimidoyl-L-glutamate from L-histidine: step 3/3. This Nematostella vectensis (Starlet sea anemone) protein is Probable imidazolonepropionase (amdhd1).